Here is a 310-residue protein sequence, read N- to C-terminus: UDP-N-acetylenolpyruvoylglucosamine reductase (310 aa).

An FAD-binding PCMH-type domain is found at 23–188; sequence KVGGNAEIFF…LKAVFKVNKG (166 aa). Arg168 is a catalytic residue. Ser217 serves as the catalytic Proton donor. The active site involves Glu287.

It belongs to the MurB family. FAD serves as cofactor.

The protein localises to the cytoplasm. The catalysed reaction is UDP-N-acetyl-alpha-D-muramate + NADP(+) = UDP-N-acetyl-3-O-(1-carboxyvinyl)-alpha-D-glucosamine + NADPH + H(+). It participates in cell wall biogenesis; peptidoglycan biosynthesis. In terms of biological role, cell wall formation. This chain is UDP-N-acetylenolpyruvoylglucosamine reductase, found in Rickettsia bellii (strain OSU 85-389).